The sequence spans 689 residues: Glycine--tRNA ligase beta subunit (689 aa).

This sequence belongs to the class-II aminoacyl-tRNA synthetase family. As to quaternary structure, tetramer of two alpha and two beta subunits.

The protein resides in the cytoplasm. The catalysed reaction is tRNA(Gly) + glycine + ATP = glycyl-tRNA(Gly) + AMP + diphosphate. The polypeptide is Glycine--tRNA ligase beta subunit (Shewanella amazonensis (strain ATCC BAA-1098 / SB2B)).